The primary structure comprises 265 residues: 2-amino-3,7-dideoxy-D-threo-hept-6-ulosonate synthase (265 aa).

Asp-25 acts as the Proton acceptor in catalysis. 1-deoxy-D-threo-hexo-2,5-diulose 6-phosphate is bound by residues 25 to 29 and 144 to 146; these read DHGIT and YAR. Residue Tyr-144 is the Proton donor of the active site. Lys-174 acts as the Schiff-base intermediate with substrate in catalysis. Residues 199–200 and 226–227 each bind 1-deoxy-D-threo-hexo-2,5-diulose 6-phosphate; these read GG and GR.

It belongs to the DeoC/FbaB aldolase family. ADHS subfamily. Homodecamer.

It catalyses the reaction 1-deoxy-D-threo-hexo-2,5-diulose 6-phosphate + L-aspartate 4-semialdehyde = 2,3-dioxopropyl phosphate + 2-amino-2,3,7-trideoxy-D-lyxo-hept-6-ulosonate. In terms of biological role, catalyzes a transaldol reaction between 6-deoxy-5-ketofructose 1-phosphate (DKFP) and L-aspartate semialdehyde (ASA) with an elimination of hydroxypyruvaldehyde phosphate to yield 2-amino-3,7-dideoxy-D-threo-hept-6-ulosonate (ADH). Plays a key role in an alternative pathway of the biosynthesis of 3-dehydroquinate (DHQ), which is involved in the canonical pathway for the biosynthesis of aromatic amino acids. The protein is 2-amino-3,7-dideoxy-D-threo-hept-6-ulosonate synthase of Halobacterium salinarum (strain ATCC 700922 / JCM 11081 / NRC-1) (Halobacterium halobium).